The following is a 113-amino-acid chain: U11-theraphotoxin-Hhn1a (113 aa).

An N-terminal signal peptide occupies residues 1 to 21 (MNTVRVTFLLVFVLAVSLGQA). Residues 22–74 (DKDENRMEMQEKTEQGKSYLDFAENLLLQKLEELEAKLLEEDSEESRNSRQKR) constitute a propeptide that is removed on maturation. The tract at residues 61-83 (EEDSEESRNSRQKRCIGEGVPCD) is disordered. 3 disulfide bridges follow: C75–C90, C82–C95, and C89–C110.

This sequence belongs to the neurotoxin 14 (magi-1) family. 01 (HNTX-16) subfamily. In terms of tissue distribution, expressed by the venom gland.

The protein localises to the secreted. In terms of biological role, probable ion channel inhibitor. The protein is U11-theraphotoxin-Hhn1a of Cyriopagopus hainanus (Chinese bird spider).